The primary structure comprises 189 residues: Peptidyl-tRNA hydrolase (189 aa).

A tRNA-binding site is contributed by Tyr15. His20 (proton acceptor) is an active-site residue. Residues Tyr64, Asn66, and Asn112 each coordinate tRNA.

It belongs to the PTH family. Monomer.

It localises to the cytoplasm. It catalyses the reaction an N-acyl-L-alpha-aminoacyl-tRNA + H2O = an N-acyl-L-amino acid + a tRNA + H(+). Functionally, hydrolyzes ribosome-free peptidyl-tRNAs (with 1 or more amino acids incorporated), which drop off the ribosome during protein synthesis, or as a result of ribosome stalling. Catalyzes the release of premature peptidyl moieties from peptidyl-tRNA molecules trapped in stalled 50S ribosomal subunits, and thus maintains levels of free tRNAs and 50S ribosomes. The sequence is that of Peptidyl-tRNA hydrolase from Sulfurihydrogenibium sp. (strain YO3AOP1).